A 365-amino-acid polypeptide reads, in one-letter code: Succinyl-diaminopimelate desuccinylase (365 aa).

Position 65 (H65) interacts with Zn(2+). Residue D67 is part of the active site. A Zn(2+)-binding site is contributed by D96. E126 functions as the Proton acceptor in the catalytic mechanism. Positions 127, 155, and 340 each coordinate Zn(2+).

Belongs to the peptidase M20A family. DapE subfamily. Homodimer. It depends on Zn(2+) as a cofactor. The cofactor is Co(2+).

The catalysed reaction is N-succinyl-(2S,6S)-2,6-diaminopimelate + H2O = (2S,6S)-2,6-diaminopimelate + succinate. It functions in the pathway amino-acid biosynthesis; L-lysine biosynthesis via DAP pathway; LL-2,6-diaminopimelate from (S)-tetrahydrodipicolinate (succinylase route): step 3/3. In terms of biological role, catalyzes the hydrolysis of N-succinyl-L,L-diaminopimelic acid (SDAP), forming succinate and LL-2,6-diaminopimelate (DAP), an intermediate involved in the bacterial biosynthesis of lysine and meso-diaminopimelic acid, an essential component of bacterial cell walls. The chain is Succinyl-diaminopimelate desuccinylase from Campylobacter jejuni subsp. jejuni serotype O:6 (strain 81116 / NCTC 11828).